A 601-amino-acid polypeptide reads, in one-letter code: Chaperone protein DnaK (601 aa).

T175 is subject to Phosphothreonine; by autocatalysis. The interval 570 to 601 is disordered; that stretch reads FAQKAASKETSKNEQNEDGSIDAEIKEEDPKA. Basic and acidic residues predominate over residues 575–584; sequence ASKETSKNEQ. The span at 585–601 shows a compositional bias: acidic residues; the sequence is NEDGSIDAEIKEEDPKA.

Belongs to the heat shock protein 70 family.

Its function is as follows. Acts as a chaperone. The polypeptide is Chaperone protein DnaK (Mycoplasma mobile (strain ATCC 43663 / 163K / NCTC 11711) (Mesomycoplasma mobile)).